The sequence spans 710 residues: Protein Smaug homolog 1 (710 aa).

Disordered regions lie at residues Ala276–Glu319 and Asn441–Leu476. Polar residues predominate over residues Gln309 to Asp318. The SAM domain maps to Glu319–Lys379.

The protein belongs to the SMAUG family.

The protein resides in the cytoplasm. It localises to the cell projection. The protein localises to the dendrite. Its subcellular location is the synapse. It is found in the synaptosome. Functionally, acts as a translational repressor. The sequence is that of Protein Smaug homolog 1 (samd4a) from Xenopus laevis (African clawed frog).